Here is a 742-residue protein sequence, read N- to C-terminus: Collectin-12 (742 aa).

The Cytoplasmic segment spans residues 1–37 (MKDDFAEEEEVQSFGYKRFGIQEGTQCTKCKNNWALK). The chain crosses the membrane as a helical; Signal-anchor for type II membrane protein span at residues 38-58 (FSIVLLYILCALLTITVAILG). Over 59 to 742 (YKVVEKMDNV…EREAVPSSIL (684 aa)) the chain is Extracellular. The N-linked (GlcNAc...) asparagine glycan is linked to Asn-67. Positions 73–142 (ETSHQTYDNK…KDTLEKLQAN (70 aa)) form a coiled coil. Asn-159 and Asn-168 each carry an N-linked (GlcNAc...) asparagine glycan. Residues 205 to 254 (NLNNLNLTQVQQRNLISNLQQSVDDTSLAIQRIKNDFQNLQQVFLQAKKD) are a coiled coil. Residue Asn-271 is glycosylated (N-linked (GlcNAc...) asparagine). Residues 439 to 608 (TILQGPPGPR…TPASEVNGCP (170 aa)) form a disordered region. Collagen-like domains follow at residues 452–511 (GDRG…KGSR) and 527–586 (GPPG…PGPS). Over residues 501 to 514 (SKGSQGPKGSRGSP) the composition is skewed to low complexity. Positions 516-532 (KPGPQGPSGDPGPPGPP) are enriched in pro residues. The segment covering 534 to 556 (KDGLPGPQGPPGFQGLQGTVGEP) has biased composition (low complexity). Pro residues predominate over residues 571–585 (PGMPGPKGPPGPPGP). Cystine bridges form between Cys-607/Cys-618, Cys-635/Cys-730, and Cys-708/Cys-722. One can recognise a C-type lectin domain in the interval 614-731 (FTDKCYYFSL…CDEINNFICE (118 aa)). Residues Phe-644, Asn-646, Glu-650, Asp-670, and Glu-674 each contribute to the Ca(2+) site. A carbohydrate-binding residues include Lys-691, Gln-694, and Asp-696. Residues Gln-694, Asp-696, Asn-697, Glu-706, Asp-707, Asn-718, Asp-719, and Glu-731 each contribute to the Ca(2+) site. Glu-706 is an a carbohydrate binding site. Residues Asn-718 and Asp-719 each coordinate a carbohydrate.

In terms of assembly, the extracellular domain forms a stable trimer. The extracellular domain interacts with fibrillar amyloid-beta peptide. Expressed in vascular endothelial cells in the heart, in perivascular macrophage and smooth muscle cells. Expressed in plaques-surrounding reactive astrocytes located in cerebral cortex and hippocampus and in leptomeningeal vessels showing characteristics of cerebral amyloid angiopathy (CAA) in a double transgenic mouse model of Alzheimer disease (at protein level). Strongly expressed in lung. Moderately expressed in heart, skeletal muscle, spleen, liver, brain, colon, testis, stomach and kidney. Expressed in neonatal astrocytes. Expressed in reactive astrocytes and vascular/perivascular cells in the brain of a double transgenic mouse model of Alzheimer disease.

It localises to the membrane. Functionally, scavenger receptor that displays several functions associated with host defense. Promotes binding and phagocytosis of Gram-positive, Gram-negative bacteria and yeast. Also binds to sialyl Lewis X or a trisaccharide and asialo-orosomucoid (ASOR). Mediates the recognition, internalization and degradation of oxidatively modified low density lipoprotein (oxLDL) by vascular endothelial cells. Binds to several carbohydrates including Gal-type ligands, D-galactose, L- and D-fucose, GalNAc, T and Tn antigens in a calcium-dependent manner and internalizes specifically GalNAc in nurse-like cells. The polypeptide is Collectin-12 (Colec12) (Mus musculus (Mouse)).